The chain runs to 936 residues: DNA topoisomerase 1 (936 aa).

A Toprim domain is found at 15–139 (RRLVIVESPT…VKRMVFHEIT (125 aa)). Residues glutamate 21 and aspartate 108 each contribute to the Mg(2+) site. The region spanning 154–611 (DIALVDAQET…FYFGGEHGVE (458 aa)) is the Topo IA-type catalytic domain. Residues 188–193 (SAGRVQ) are interaction with DNA. The active-site O-(5'-phospho-DNA)-tyrosine intermediate is tyrosine 339. Disordered stretches follow at residues 661 to 688 (LERMVDDPDNPGEQKPQRANLKEDLTPD), 732 to 767 (VLPEPEDGGDDGTAGTPAKKGKKPTGPKPRTGSLFR), 841 to 884 (KRRG…ETNA), and 903 to 936 (LLADRRARGPVKKKAPAKKAAKKAPAKKAAAKKA). Basic residues predominate over residues 910–936 (RGPVKKKAPAKKAAKKAPAKKAAAKKA).

This sequence belongs to the type IA topoisomerase family. As to quaternary structure, monomer. Requires Mg(2+) as cofactor.

It carries out the reaction ATP-independent breakage of single-stranded DNA, followed by passage and rejoining.. In terms of biological role, releases the supercoiling and torsional tension of DNA, which is introduced during the DNA replication and transcription, by transiently cleaving and rejoining one strand of the DNA duplex. Introduces a single-strand break via transesterification at a target site in duplex DNA. The scissile phosphodiester is attacked by the catalytic tyrosine of the enzyme, resulting in the formation of a DNA-(5'-phosphotyrosyl)-enzyme intermediate and the expulsion of a 3'-OH DNA strand. The free DNA strand then undergoes passage around the unbroken strand, thus removing DNA supercoils. Finally, in the religation step, the DNA 3'-OH attacks the covalent intermediate to expel the active-site tyrosine and restore the DNA phosphodiester backbone. Functionally, relaxes negatively (but not positively) supercoiled DNA, concatanates and knots circular ssDNA at 52 but not 37 degrees Celsius. Preferentially nicks supercoiled DNA at C(G/T)CTT, cutting between the TT residues, binds ss and dsDNA with the recognition site. This Mycolicibacterium smegmatis (strain ATCC 700084 / mc(2)155) (Mycobacterium smegmatis) protein is DNA topoisomerase 1.